A 127-amino-acid polypeptide reads, in one-letter code: NADPH-dependent 7-cyano-7-deazaguanine reductase (127 aa).

Cysteine 40 functions as the Thioimide intermediate in the catalytic mechanism. The Proton donor role is filled by aspartate 47. Substrate contacts are provided by residues 62–64 and 81–82; these read VEL and HE.

The protein belongs to the GTP cyclohydrolase I family. QueF type 1 subfamily.

Its subcellular location is the cytoplasm. It catalyses the reaction 7-aminomethyl-7-carbaguanine + 2 NADP(+) = 7-cyano-7-deazaguanine + 2 NADPH + 3 H(+). The protein operates within tRNA modification; tRNA-queuosine biosynthesis. Functionally, catalyzes the NADPH-dependent reduction of 7-cyano-7-deazaguanine (preQ0) to 7-aminomethyl-7-deazaguanine (preQ1). The chain is NADPH-dependent 7-cyano-7-deazaguanine reductase from Campylobacter jejuni subsp. jejuni serotype O:2 (strain ATCC 700819 / NCTC 11168).